The following is a 252-amino-acid chain: Imidazole glycerol phosphate synthase subunit HisF (252 aa).

Catalysis depends on residues Asp11 and Asp130.

The protein belongs to the HisA/HisF family. In terms of assembly, heterodimer of HisH and HisF.

The protein resides in the cytoplasm. It carries out the reaction 5-[(5-phospho-1-deoxy-D-ribulos-1-ylimino)methylamino]-1-(5-phospho-beta-D-ribosyl)imidazole-4-carboxamide + L-glutamine = D-erythro-1-(imidazol-4-yl)glycerol 3-phosphate + 5-amino-1-(5-phospho-beta-D-ribosyl)imidazole-4-carboxamide + L-glutamate + H(+). It participates in amino-acid biosynthesis; L-histidine biosynthesis; L-histidine from 5-phospho-alpha-D-ribose 1-diphosphate: step 5/9. IGPS catalyzes the conversion of PRFAR and glutamine to IGP, AICAR and glutamate. The HisF subunit catalyzes the cyclization activity that produces IGP and AICAR from PRFAR using the ammonia provided by the HisH subunit. This chain is Imidazole glycerol phosphate synthase subunit HisF, found in Bacillus velezensis (strain DSM 23117 / BGSC 10A6 / LMG 26770 / FZB42) (Bacillus amyloliquefaciens subsp. plantarum).